Here is a 339-residue protein sequence, read N- to C-terminus: MAVVLDLLNKDTRPKLDAPARPRHPEKAHRPDTAIQRKPDWIRVKAPGSKLWAETKDIVRANNLVTVCEEAGCPNIGECWEKRHATFMIMGDTCTRACSFCNVRTGLPAALDEAEPEKVAEAVAKLGLHHVVVTSVDRDDLKDGGAEHFSRTIAAIRRASPGTTVEILTPDFLRKPGALEVVVAAKPDVFNHNMETVPGKYVTVRPGARYFHSVRLLQRVKELDPTIFTKSGIMVGLGEERNEVVQLMDDLRSAEVDFLTIGQYLQPTRKHHEVVRFVPPDEFKAYETTAYAKGFLLVSATPLTRSSHHAGEDFARLKAARLAKLGPAPVAASIRAVNA.

The interval 13-35 (RPKLDAPARPRHPEKAHRPDTAI) is disordered. The [4Fe-4S] cluster site is built by Cys68, Cys73, Cys79, Cys94, Cys98, Cys101, and Ser307. Positions 80-296 (WEKRHATFMI…ETTAYAKGFL (217 aa)) constitute a Radical SAM core domain.

The protein belongs to the radical SAM superfamily. Lipoyl synthase family. [4Fe-4S] cluster is required as a cofactor.

The protein localises to the cytoplasm. It catalyses the reaction [[Fe-S] cluster scaffold protein carrying a second [4Fe-4S](2+) cluster] + N(6)-octanoyl-L-lysyl-[protein] + 2 oxidized [2Fe-2S]-[ferredoxin] + 2 S-adenosyl-L-methionine + 4 H(+) = [[Fe-S] cluster scaffold protein] + N(6)-[(R)-dihydrolipoyl]-L-lysyl-[protein] + 4 Fe(3+) + 2 hydrogen sulfide + 2 5'-deoxyadenosine + 2 L-methionine + 2 reduced [2Fe-2S]-[ferredoxin]. Its pathway is protein modification; protein lipoylation via endogenous pathway; protein N(6)-(lipoyl)lysine from octanoyl-[acyl-carrier-protein]: step 2/2. Catalyzes the radical-mediated insertion of two sulfur atoms into the C-6 and C-8 positions of the octanoyl moiety bound to the lipoyl domains of lipoate-dependent enzymes, thereby converting the octanoylated domains into lipoylated derivatives. This is Lipoyl synthase from Methylorubrum extorquens (strain CM4 / NCIMB 13688) (Methylobacterium extorquens).